A 1155-amino-acid polypeptide reads, in one-letter code: Agglutinin-like protein 3 (1155 aa).

The N-terminal stretch at 1 to 17 (MLQQYTLLLIYLSVATA) is a signal peptide. Intrachain disulfides connect Cys-73–Cys-150, Cys-96–Cys-112, Cys-205–Cys-298, and Cys-227–Cys-256. 3 ALS repeats span residues 365–396 (TTIT…VDIP), 401–432 (TTVT…VQVP), and 438–469 (VTTT…IREP). Asn-471 is a glycosylation site (N-linked (GlcNAc...) asparagine). 2 ALS repeats span residues 474-505 (VTTT…IKEP) and 510-541 (VTTT…IREP). Asn-543 carries N-linked (GlcNAc...) asparagine glycosylation. ALS repeat units follow at residues 546 to 577 (VTTT…IREP) and 582 to 613 (VTTT…IREP). Asn-615 is a glycosylation site (N-linked (GlcNAc...) asparagine). An ALS 8 repeat occupies 618 to 649 (VTTTEYWSQSYATTTTITAPPGETDTVLIREP). Asn-651 is a glycosylation site (N-linked (GlcNAc...) asparagine). 2 ALS repeats span residues 654–685 (VTTT…IKEP) and 690–721 (VTTT…IREP). Asn-723 carries N-linked (GlcNAc...) asparagine glycosylation. Residues 726-757 (VTTTEYWSQSYATTTTITAPPGETDTVLIREP) form an ALS 11 repeat. N-linked (GlcNAc...) asparagine glycosylation occurs at Asn-759. One copy of the ALS 12 repeat lies at 762–793 (VTTTEYWSQSFATTTTVTAPPGGTDTVIIREP). The N-linked (GlcNAc...) asparagine glycan is linked to Asn-795. ALS repeat units lie at residues 798 to 829 (VTTT…IREP) and 834 to 863 (VTTT…VIIY). N-linked (GlcNAc...) asparagine glycosylation is present at Asn-881. Residues 936–1115 (TTTESTLQSP…NSDTQQTTLS (180 aa)) are disordered. Residues 949–965 (FSESGVSVETESSTFTT) show a composition bias toward low complexity. Residues 966–977 (AQTNPSVPTTES) show a composition bias toward polar residues. Residues 1010 to 1019 (TTSTAASTST) show a composition bias toward low complexity. Asn-1023 carries N-linked (GlcNAc...) asparagine glycosylation. Low complexity-rich tracts occupy residues 1034 to 1058 (ASSP…STSV) and 1071 to 1115 (APSA…TTLS). Residue Asn-1099 is glycosylated (N-linked (GlcNAc...) asparagine). Ser-1134 carries the GPI-anchor amidated serine lipid modification. Residues 1135-1155 (GSVIQHSTWLCGLITLLSLFI) constitute a propeptide, removed in mature form.

Belongs to the ALS family. Post-translationally, the GPI-anchor is attached to the protein in the endoplasmic reticulum and serves to target the protein to the cell surface. There, the glucosamine-inositol phospholipid moiety is cleaved off and the GPI-modified mannoprotein is covalently attached via its lipidless GPI glycan remnant to the 1,6-beta-glucan of the outer cell wall layer.

The protein resides in the cell membrane. It localises to the secreted. Its subcellular location is the cell wall. In terms of biological role, cell surface adhesion protein which mediates both yeast-to-host tissue adherence and yeast aggregation. Plays an important role in the biofilm formation and pathogenesis of C.albicans infections. Necessary for C.albicans to bind to N-cadherin on endothelial cells and E-cadherin on oral epithelial cells and subsequent endocytosis by these cells. During disseminated infection, mediates initial trafficking to the brain and renal cortex and contributes to fungal persistence in the kidneys. This is Agglutinin-like protein 3 (ALS3) from Candida albicans (strain SC5314 / ATCC MYA-2876) (Yeast).